Here is a 181-residue protein sequence, read N- to C-terminus: MLNEPLPSSMEDNPQFKEETSLQKFRRRLKEEPLIPLGCAATCYALYRAYRSMKAGDSVEMNKMFRARIYAQFFTLVAVVAGGMYYKTERQQRREFEKMVEQRKAQEKRDAWLRELEIRDKEDKDWRERHAAIEAAAKEAGKRPAPKKLPEQDAARSAIEPADERSIGVLSAVRDLWMQQK.

An HIG1 domain is found at 6–97; that stretch reads LPSSMEDNPQ…TERQQRREFE (92 aa). A run of 2 helical transmembrane segments spans residues 33–49 and 69–86; these read PLIP…LYRA and IYAQ…GMYY. The segment covering 134–154 has biased composition (basic and acidic residues); it reads EAAAKEAGKRPAPKKLPEQDA. Residues 134-161 are disordered; that stretch reads EAAAKEAGKRPAPKKLPEQDAARSAIEP.

The protein belongs to the RCF1 family. As to quaternary structure, associates with the respiratory chain complex III/complex IV supercomplex.

Its subcellular location is the mitochondrion membrane. Cytochrome c oxidase subunit which plays a role in assembly of respiratory supercomplexes. The sequence is that of Respiratory supercomplex factor 1, mitochondrial (rcf1) from Aspergillus fumigatus (strain CBS 144.89 / FGSC A1163 / CEA10) (Neosartorya fumigata).